A 590-amino-acid polypeptide reads, in one-letter code: MNNYFLRKENFFILFCFVFVSIFFVSNVTIIKCNNVENKIDNVGKKIENVGKKIGDMENKNDNVENKNDNVGNKNDNVKNASSDLYKYKLYGDIDEYAYYFLDIDIGKPSQRISLILDTGSSSLSFPCNGCKDCGIHMEKPYNLNYSKTSSILYCNKSNCPYGLKCVGNKCEYLQSYCEGSQIYGFYFSDIVTLPSYNNKNKISFEKLMGCHMHEESLFLHQQATGVLGFSLTKPNGVPTFVDLLFKHTPSLKPIYSICVSEHGGELIIGGYEPDYFLSNQKEKQKMDKSDNNSSNKGNVSIKLKNNDKNDDEENNSKDVIVSNNVEDIVWQAITRKYYYYIKIYGLDLYGTNIMDKKELDMLVDSGSTFTHIPENIYNQINYYLDILCIHDMTNIYEINKRLKLTNESLNKPLVYFEDFKTALKNIIQNENLCIKIVDGVQCWKSLENLPNLYITLSNNYKMIWKPSSYLYKKESFWCKGLEKQVNNKPILGLTFFKNKQVIFDLQQNQIAFIESKCPSNLTSSRPRTFNEYREKENIFLKVSYINLYCLWLLLALTILLSLILYVRKMFYMDYFPLSDQNKSPIQEST.

Residues 1–544 (MNNYFLRKEN…EKENIFLKVS (544 aa)) are Lumenal-facing. The stretch at 33–81 (CNNVENKIDNVGKKIENVGKKIGDMENKNDNVENKNDNVGNKNDNVKNA) forms a coiled coil. A Peptidase A1 domain is found at 100 to 514 (YFLDIDIGKP…DLQQNQIAFI (415 aa)). Residue D118 is part of the active site. Cystine bridges form between C128–C211, C131–C134, C155–C166, C160–C171, C259–C518, C389–C434, and C443–C479. Basic and acidic residues predominate over residues 282-291 (KEKQKMDKSD). Residues 282 to 316 (KEKQKMDKSDNNSSNKGNVSIKLKNNDKNDDEENN) form a disordered region. Over residues 292 to 304 (NNSSNKGNVSIKL) the composition is skewed to low complexity. Residue D365 is part of the active site. Residues 545–565 (YINLYCLWLLLALTILLSLIL) form a helical membrane-spanning segment. The Cytoplasmic segment spans residues 566-590 (YVRKMFYMDYFPLSDQNKSPIQEST).

The protein belongs to the peptidase A1 family. Component of a complex composed of SPC25 and PMV; the interaction is mediated via the transmembrane domains. The complex interacts with the SEC61 channel-forming translocon complex and is involved in the recognition and import of PEXEL motif-containing proteins into the ER for subsequent export. Post-translationally, it is not clear if the zymogen has a cleavable propeptide. In vitro, appears to be cleaved between Asn-80 and Ala-81. Cleavage of the putative propeptide is dispensable for catalytic activity.

Its subcellular location is the endoplasmic reticulum membrane. Its activity is regulated as follows. Inhibited by peptidomimetic inhibitor WEHI-842. Inhibited by Cu(2+) and Hg(2+). During the asexual blood stage, plays an essential role in the export of several proteins into the host erythrocytes by cleaving the pentameric localization motif RxLxE/Q/D (termed Plasmodium export element (PEXEL)) located downstream of the N-terminal secretory signal sequence. Specifically, cleaves after the leucine residue in the RxLxE/Q/D (or RxLxxE) motif of exported proteins including RESA, EMP2, EMP3, KAHRP, RIF/Rifin and STEVOR. Also, by regulating protein export, plays an essential role in gametocyte development and thus, parasite transmission to the mosquito vector. The sequence is that of Plasmepsin V from Plasmodium falciparum (isolate 3D7).